Consider the following 1191-residue polypeptide: Rho GTPase-activating protein 20 (1191 aa).

Residues 1–23 (MEAMSPQQETLGGQPGRSSSLTG) show a composition bias toward polar residues. Positions 1-45 (MEAMSPQQETLGGQPGRSSSLTGVSRLAGGSCTKKKMKTLAERRR) are disordered. Ser-46 is modified (phosphoserine). The PH domain occupies 78-180 (SLVCSNRTLL…EQKDKWLSLL (103 aa)). The 102-residue stretch at 194–295 (KSIPLKIFAK…TPFNLQEPFL (102 aa)) folds into the Ras-associating domain. The 187-residue stretch at 365-551 (ISLPNICEND…FLIENCLRIF (187 aa)) folds into the Rho-GAP domain. Phosphoserine occurs at positions 704 and 730. Disordered regions lie at residues 768–791 (SKKNATTQNTKKKSLSGSEGNHVK), 926–1014 (RLNL…SRPA), 1052–1123 (KKAK…RHCS), and 1140–1191 (HEEI…TKDI). Residues 934–961 (SYSSLSSPGTSPSGSSVSSQDSAFSQIS) are compositionally biased toward low complexity. Composition is skewed to polar residues over residues 962–981 (EHSVFTPTETSSPIDCTFQA) and 1103–1116 (PVQSAQRCSSSPFQ). The segment covering 1182–1191 (IEDRYLTKDI) has biased composition (basic and acidic residues).

As to expression, expressed predominantly in the brain. Lower expression is found in lymph nodes.

GTPase activator for the Rho-type GTPases by converting them to an inactive GDP-bound state. In Homo sapiens (Human), this protein is Rho GTPase-activating protein 20 (ARHGAP20).